Reading from the N-terminus, the 432-residue chain is Enolase 1 (432 aa).

Q163 is a binding site for (2R)-2-phosphoglycerate. E205 serves as the catalytic Proton donor. The Mg(2+) site is built by D242, E287, and D314. 4 residues coordinate (2R)-2-phosphoglycerate: K339, R368, S369, and K390. K339 (proton acceptor) is an active-site residue.

It belongs to the enolase family. Mg(2+) serves as cofactor.

It is found in the cytoplasm. Its subcellular location is the secreted. The protein resides in the cell surface. It carries out the reaction (2R)-2-phosphoglycerate = phosphoenolpyruvate + H2O. It functions in the pathway carbohydrate degradation; glycolysis; pyruvate from D-glyceraldehyde 3-phosphate: step 4/5. Its function is as follows. Catalyzes the reversible conversion of 2-phosphoglycerate (2-PG) into phosphoenolpyruvate (PEP). It is essential for the degradation of carbohydrates via glycolysis. This chain is Enolase 1, found in Lactobacillus johnsonii (strain CNCM I-12250 / La1 / NCC 533).